Reading from the N-terminus, the 159-residue chain is MPREKGRKVVASNRKARHDYSILDTYEAGMALTGTEVKSLRAGRASLVDAFAQERNGELYLHGMHIPEYVQGTWTNHEPRRTRKLLLNRTEIDRLIGKTRESGLTLVPLQVYFSDGWAKVEIGVAKGKKAYDKRQDLAKRDAQREMARAAGRRSKGMDD.

A compositionally biased stretch (basic and acidic residues) spans 133–147; the sequence is KRQDLAKRDAQREMA. The segment at 133 to 159 is disordered; sequence KRQDLAKRDAQREMARAAGRRSKGMDD. Positions 150 to 159 are enriched in basic residues; it reads AGRRSKGMDD.

This sequence belongs to the SmpB family.

Its subcellular location is the cytoplasm. In terms of biological role, required for rescue of stalled ribosomes mediated by trans-translation. Binds to transfer-messenger RNA (tmRNA), required for stable association of tmRNA with ribosomes. tmRNA and SmpB together mimic tRNA shape, replacing the anticodon stem-loop with SmpB. tmRNA is encoded by the ssrA gene; the 2 termini fold to resemble tRNA(Ala) and it encodes a 'tag peptide', a short internal open reading frame. During trans-translation Ala-aminoacylated tmRNA acts like a tRNA, entering the A-site of stalled ribosomes, displacing the stalled mRNA. The ribosome then switches to translate the ORF on the tmRNA; the nascent peptide is terminated with the 'tag peptide' encoded by the tmRNA and targeted for degradation. The ribosome is freed to recommence translation, which seems to be the essential function of trans-translation. The polypeptide is SsrA-binding protein (Salinispora arenicola (strain CNS-205)).